Consider the following 377-residue polypeptide: Nitric oxide reductase FlRd-NAD(+) reductase (377 aa).

It belongs to the FAD-dependent oxidoreductase family. It depends on FAD as a cofactor.

It localises to the cytoplasm. It carries out the reaction 2 reduced [nitric oxide reductase rubredoxin domain] + NAD(+) + H(+) = 2 oxidized [nitric oxide reductase rubredoxin domain] + NADH. The protein operates within nitrogen metabolism; nitric oxide reduction. Its function is as follows. One of at least two accessory proteins for anaerobic nitric oxide (NO) reductase. Reduces the rubredoxin moiety of NO reductase. This Escherichia coli O9:H4 (strain HS) protein is Nitric oxide reductase FlRd-NAD(+) reductase.